The sequence spans 263 residues: HTH-type transcriptional regulator KdgR (263 aa).

The region spanning 13-74 is the HTH iclR-type domain; it reads VSSVLKVFGI…GESEKYSLTL (62 aa). The segment at residues 34–53 is a DNA-binding region (H-T-H motif); the sequence is ITELSQRVMMSKSTVYRFLQ. Positions 89–258 constitute an IclR-ED domain; that stretch reads LIRSADIQMR…ARKISAQMGY (170 aa).

The protein localises to the cytoplasm. Functionally, transcriptional repressor that negatively regulates the expression of kdgT, kdgK and kdgA, which encode proteins involved in transport and catabolism of 2-keto-3-deoxygluconate (KDG). Also represses expression of eda, which encodes the Entner-Doudoroff aldolase, by binding to its P2 promoter region. This is HTH-type transcriptional regulator KdgR from Escherichia coli (strain K12).